Consider the following 347-residue polypeptide: DNA-directed RNA polymerase subunit alpha (347 aa).

The interval 1 to 226 (MLISQRPTLS…ELFGLARELN (226 aa)) is alpha N-terminal domain (alpha-NTD). An alpha C-terminal domain (alpha-CTD) region spans residues 241 to 347 (ADHIASFALP…DQDYAETEQL (107 aa)).

Belongs to the RNA polymerase alpha chain family. Homodimer. The RNAP catalytic core consists of 2 alpha, 1 beta, 1 beta' and 1 omega subunit. When a sigma factor is associated with the core the holoenzyme is formed, which can initiate transcription.

It carries out the reaction RNA(n) + a ribonucleoside 5'-triphosphate = RNA(n+1) + diphosphate. Functionally, DNA-dependent RNA polymerase catalyzes the transcription of DNA into RNA using the four ribonucleoside triphosphates as substrates. The sequence is that of DNA-directed RNA polymerase subunit alpha from Mycobacterium ulcerans (strain Agy99).